The sequence spans 244 residues: Eukaryotic translation initiation factor 6 (244 aa).

2 positions are modified to phosphoserine; by CK1: Ser-174 and Ser-175.

It belongs to the eIF-6 family. Monomer. Associates with the 60S ribosomal subunit. In terms of processing, phosphorylation at Ser-174 and Ser-175 promotes nuclear export.

The protein resides in the cytoplasm. The protein localises to the nucleus. It localises to the nucleolus. In terms of biological role, binds to the 60S ribosomal subunit and prevents its association with the 40S ribosomal subunit to form the 80S initiation complex in the cytoplasm. Is also involved in ribosome biogenesis. Associates with pre-60S subunits in the nucleus and is involved in its nuclear export. This chain is Eukaryotic translation initiation factor 6 (tif6), found in Schizosaccharomyces pombe (strain 972 / ATCC 24843) (Fission yeast).